The sequence spans 246 residues: Type III pantothenate kinase (246 aa).

6–13 (DVGNTHSV) is an ATP binding site. 103–106 (GADR) contributes to the substrate binding site. D105 (proton acceptor) is an active-site residue. D125 lines the K(+) pocket. ATP is bound at residue T128. T179 is a substrate binding site.

It belongs to the type III pantothenate kinase family. In terms of assembly, homodimer. It depends on NH4(+) as a cofactor. The cofactor is K(+).

The protein localises to the cytoplasm. The catalysed reaction is (R)-pantothenate + ATP = (R)-4'-phosphopantothenate + ADP + H(+). It participates in cofactor biosynthesis; coenzyme A biosynthesis; CoA from (R)-pantothenate: step 1/5. Functionally, catalyzes the phosphorylation of pantothenate (Pan), the first step in CoA biosynthesis. The sequence is that of Type III pantothenate kinase (coaX) from Thermotoga maritima (strain ATCC 43589 / DSM 3109 / JCM 10099 / NBRC 100826 / MSB8).